We begin with the raw amino-acid sequence, 587 residues long: L-ascorbate oxidase (587 aa).

Residues 1–33 (MAKVADKPFFPKPFLSFLVLSIIFGFGITLSEA) form the signal peptide. Plastocyanin-like domains are found at residues 38–157 (IKHY…LIVD) and 169–335 (DEEI…NYLP). Cystine bridges form between C54/C236, C116/C574, and C215/C228. Cu cation-binding residues include H95, H97, H139, and H141. Residues N360, N401, and N475 are each glycosylated (N-linked (GlcNAc...) asparagine). One can recognise a Plastocyanin-like 3 domain in the interval 379–559 (NRRLFLLNTQ…HMGMGVVFAE (181 aa)). Cu cation-binding residues include H480, H483, H485, H542, C543, H544, H548, and M553.

Belongs to the multicopper oxidase family. Dimer. Cu cation serves as cofactor.

It localises to the secreted. The catalysed reaction is 4 L-ascorbate + O2 = 4 monodehydro-L-ascorbate radical + 2 H2O. Its function is as follows. May be involved in a redox system involving ascorbic acid. The chain is L-ascorbate oxidase from Cucumis sativus (Cucumber).